A 359-amino-acid polypeptide reads, in one-letter code: Phospho-N-acetylmuramoyl-pentapeptide-transferase (359 aa).

The next 10 membrane-spanning stretches (helical) occupy residues 3–23 (QIMIAVAIAVAVSILLTPALI), 55–75 (VAILAGIWAGYFGTHLAGLAF), 80–100 (ITASGLLVLGLATSLGGVGFL), 117–137 (TAKTVGQITSAVLFAVLVLQF), 156–176 (IATVTLTPALFVLFCVLVVSA), 187–207 (LDGLAAGCMAMVTGAYVLITF), 231–251 (LALIAAATAGACIGFLWWNAA), 255–275 (IFMGDTGSLALGGIIAGLSVT), 280–300 (ILAVVLGALFVAEITSVVLQI), and 334–354 (FWLLTAITCGLGVALFYGEWL).

Belongs to the glycosyltransferase 4 family. MraY subfamily. The cofactor is Mg(2+).

It is found in the cell membrane. It carries out the reaction UDP-N-acetyl-alpha-D-muramoyl-L-alanyl-gamma-D-glutamyl-meso-2,6-diaminopimeloyl-D-alanyl-D-alanine + di-trans,octa-cis-undecaprenyl phosphate = di-trans,octa-cis-undecaprenyl diphospho-N-acetyl-alpha-D-muramoyl-L-alanyl-D-glutamyl-meso-2,6-diaminopimeloyl-D-alanyl-D-alanine + UMP. The protein operates within cell wall biogenesis; peptidoglycan biosynthesis. Its function is as follows. Catalyzes the initial step of the lipid cycle reactions in the biosynthesis of the cell wall peptidoglycan: transfers peptidoglycan precursor phospho-MurNAc-pentapeptide from UDP-MurNAc-pentapeptide onto the lipid carrier undecaprenyl phosphate, yielding undecaprenyl-pyrophosphoryl-MurNAc-pentapeptide, known as lipid I. The chain is Phospho-N-acetylmuramoyl-pentapeptide-transferase from Mycobacterium ulcerans (strain Agy99).